The chain runs to 576 residues: MEFRKEEFKKLAGNTLGHLHRILEKKQKNGETIELTEEGQPVVKEEKHQPVVDCTCFGLPRRYIIAIMSGLGFCISFGIRCNLGVAIVSMVNNNTVYKGNKLVIEQAQFNWDPETVGMIHGSFFWGYIVTQIPGGYICQKFAANRVFGFAIVATSTLNMLIPSAARVHFACVICVRILQGLVEGVTYPACHGIWSKWAPPLERSRLATTAFCGSYAGAVVAMPLAGVLVQYSGWSSVFYVYGSFGITWYMFWILVSYESPAQHPTISEEERKYIEESIGESTGFMNPMAKFKAPWRKFFTSMPVYAIIVANFCRSWTFYLLLISQPAYFEEVFGFAISKVGLLSALPHLVMTIIVPIGGQIADFLRTKRIMSTTNVRKMMNCGGFGMEATLLLVVGYSHSRGVAISFLVLAVGFSGFAISGFNVNHLDIAPRYASILMGISNGVGTLSGMVCPLIVGAMTKHKTREEWQYVFLIASLVHYGGVVFYGIFASGEKQPWAEPEETSDEKCGFIHEDELADESEEQTQAHGGYGSYGATQTTSQQNGGWATDWEKKDEFIQDQGKDPYLYGTVAERDLS.

The Cytoplasmic portion of the chain corresponds to 1 to 63 (MEFRKEEFKK…CTCFGLPRRY (63 aa)). Residues 64-84 (IIAIMSGLGFCISFGIRCNLG) traverse the membrane as a helical segment. At 85–116 (VAIVSMVNNNTVYKGNKLVIEQAQFNWDPETV) the chain is on the vesicular side. N93 carries an N-linked (GlcNAc...) asparagine glycan. A helical membrane pass occupies residues 117 to 137 (GMIHGSFFWGYIVTQIPGGYI). The Cytoplasmic segment spans residues 138–140 (CQK). Residues 141 to 161 (FAANRVFGFAIVATSTLNMLI) form a helical membrane-spanning segment. Residues 162-168 (PSAARVH) are Vesicular-facing. Residues 169–189 (FACVICVRILQGLVEGVTYPA) traverse the membrane as a helical segment. Residues 190–208 (CHGIWSKWAPPLERSRLAT) are Cytoplasmic-facing. A helical membrane pass occupies residues 209-229 (TAFCGSYAGAVVAMPLAGVLV). The Vesicular segment spans residues 230 to 236 (QYSGWSS). A helical membrane pass occupies residues 237-257 (VFYVYGSFGITWYMFWILVSY). Topologically, residues 258–297 (ESPAQHPTISEEERKYIEESIGESTGFMNPMAKFKAPWRK) are cytoplasmic. A helical transmembrane segment spans residues 298–320 (FFTSMPVYAIIVANFCRSWTFYL). At 321–341 (LLISQPAYFEEVFGFAISKVG) the chain is on the vesicular side. Residues 342 to 362 (LLSALPHLVMTIIVPIGGQIA) traverse the membrane as a helical segment. The Cytoplasmic segment spans residues 363–378 (DFLRTKRIMSTTNVRK). Residues 379–399 (MMNCGGFGMEATLLLVVGYSH) form a helical membrane-spanning segment. Residues 400-401 (SR) lie on the Vesicular side of the membrane. A helical membrane pass occupies residues 402-422 (GVAISFLVLAVGFSGFAISGF). At 423 to 435 (NVNHLDIAPRYAS) the chain is on the cytoplasmic side. A helical transmembrane segment spans residues 436–456 (ILMGISNGVGTLSGMVCPLIV). Residues 457–469 (GAMTKHKTREEWQ) lie on the Vesicular side of the membrane. The helical transmembrane segment at 470–490 (YVFLIASLVHYGGVVFYGIFA) threads the bilayer. The Cytoplasmic segment spans residues 491–576 (SGEKQPWAEP…YGTVAERDLS (86 aa)). Residues 517–552 (ADESEEQTQAHGGYGSYGATQTTSQQNGGWATDWEK) form a disordered region. The segment covering 534-545 (GATQTTSQQNGG) has biased composition (polar residues).

This sequence belongs to the major facilitator superfamily. Sodium/anion cotransporter family. VGLUT subfamily.

The protein resides in the cytoplasmic vesicle. The protein localises to the secretory vesicle. Its subcellular location is the synaptic vesicle membrane. It is found in the cell membrane. It localises to the synapse. The protein resides in the synaptosome. It carries out the reaction L-glutamate(out) = L-glutamate(in). It catalyses the reaction chloride(in) = chloride(out). The enzyme catalyses 3 Na(+)(out) + phosphate(out) = 3 Na(+)(in) + phosphate(in). The catalysed reaction is phosphate(in) = phosphate(out). It carries out the reaction K(+)(in) + H(+)(out) = K(+)(out) + H(+)(in). With respect to regulation, chloride channel activity is allosterically activated by lumenal H(+) and Cl(-) leading to synaptic vesicles acidification. The L-glutamate transport activity is allosterically activated by lumenal H(+) and Cl(-). The allosteric activation by H(+) efficiently prevents non-vesicular efflux across the plasma membrane, thereby restricting L-glutamate transport activity to acidic membranes such as synaptic vesicles. Multifunctional transporter that transports L-glutamate as well as multiple ions such as chloride, proton, potassium, sodium and phosphate. At the synaptic vesicle membrane, mainly functions as an uniporter which transports preferentially L-glutamate but also phosphate from the cytoplasm into synaptic vesicles at presynaptic nerve terminals of excitatory neural cells. The L-glutamate or phosphate uniporter activity is electrogenic and is driven by the proton electrochemical gradient, mainly by the electrical gradient established by the vacuolar H(+)-ATPase across the synaptic vesicle membrane. In addition, functions as a chloride channel that allows a chloride permeation through the synaptic vesicle membrane that affects the proton electrochemical gradient and promotes synaptic vesicles acidification. Moreover, may function as a K(+)/H(+) antiport allowing to maintain the electrical gradient and to decrease chemical gradient and therefore sustain vesicular glutamate uptake. The vesicular K(+)/H(+) antiport activity is electroneutral. At the plasma membrane, following exocytosis, functions as a symporter of Na(+) and phosphate from the extracellular space to the cytoplasm allowing synaptic phosphate homeostasis regulation. The symporter activity is driven by an inside negative membrane potential and is electrogenic. Is necessary for synaptic signaling of visual-evoked responses from photoreceptors. In Xenopus laevis (African clawed frog), this protein is Vesicular glutamate transporter 1.